Here is a 201-residue protein sequence, read N- to C-terminus: Indolepyruvate oxidoreductase subunit IorB (201 aa).

Heterodimer of the IorA and IorB subunits.

It catalyses the reaction indole-3-pyruvate + 2 oxidized [2Fe-2S]-[ferredoxin] + CoA = (indol-3-yl)acetyl-CoA + 2 reduced [2Fe-2S]-[ferredoxin] + CO2 + H(+). Catalyzes the ferredoxin-dependent oxidative decarboxylation of arylpyruvates. The chain is Indolepyruvate oxidoreductase subunit IorB (iorB) from Archaeoglobus fulgidus (strain ATCC 49558 / DSM 4304 / JCM 9628 / NBRC 100126 / VC-16).